The primary structure comprises 361 residues: Free fatty acid receptor 4 (361 aa).

Residues 1–21 (MSPECAQTTGPGPSRTPDQVN) are disordered. At 1–45 (MSPECAQTTGPGPSRTPDQVNRTHFPFFSDVKGDHRLVLSVLETT) the chain is on the extracellular side. N-linked (GlcNAc...) asparagine glycosylation is present at asparagine 21. Residues 46 to 66 (VLGLIFVVSLLGNVCALVLVV) form a helical membrane-spanning segment. Residues 67–77 (RRRRRGATVSL) lie on the Cytoplasmic side of the membrane. A helical membrane pass occupies residues 78 to 98 (VLNLFCADLLFTSAIPLVLVV). The Extracellular segment spans residues 99–103 (RWTEA). Residues 104-124 (WLLGPVVCHLLFYVMTMSGSV) traverse the membrane as a helical segment. A disulfide bond links cysteine 111 and cysteine 194. At 125-156 (TILTLAAVSLERMVCIVRLRRGLSGPGRRTQA) the chain is on the cytoplasmic side. Residues 157–177 (ALLAFIWGYSALAALPLCILF) traverse the membrane as a helical segment. At 178–204 (RVVPQRLPGGDQEIPICTLDWPNRIGE) the chain is on the extracellular side. Residues 205–225 (ISWDVFFVTLNFLVPGLVIVI) traverse the membrane as a helical segment. At 226-268 (SYSKILQITKASRKRLTLSLAYSESHQIRVSQQDYRLFRTLFL) the chain is on the cytoplasmic side. The chain crosses the membrane as a helical span at residues 269 to 289 (LMVSFFIMWSPIIITILLILI). Residues 290-295 (QNFRQD) are Extracellular-facing. A helical membrane pass occupies residues 296 to 316 (LVIWPSLFFWVVAFTFANSAL). Residues 317–361 (NPILYNMSLFRSEWRKIFCCFFFPEKGAIFTETSIRRNDLSVIST) are Cytoplasmic-facing. Phosphothreonine occurs at positions 347 and 349. Phosphoserine occurs at positions 350, 357, and 360.

Belongs to the G-protein coupled receptor 1 family. Interacts (via C-terminus) with ARRB2 following LCFAs stimulation. In terms of processing, phosphorylated at two clusters of Ser and Thr residues located in the intracellular C-terminus. Prerequisite for FFAR4 internalization via an ARRB2-dependent pathway.

Its subcellular location is the cell membrane. The protein resides in the endosome membrane. It is found in the lysosome membrane. It localises to the cell projection. The protein localises to the cilium membrane. G-protein-coupled receptor for long-chain fatty acids (LCFAs) with a major role in adipogenesis, energy metabolism and inflammation. Signals via G-protein and beta-arrestin pathways. LCFAs sensing initiates activation of phosphoinositidase C-linked G proteins GNAQ and GNA11 (G(q)/G(11)), inducing a variety of cellular responses via second messenger pathways such as intracellular calcium mobilization, modulation of cyclic adenosine monophosphate (cAMP) production, and mitogen-activated protein kinases (MAPKs). After LCFAs binding, associates with beta-arrestin ARRB2 that acts as an adapter protein coupling the receptor to specific downstream signaling pathways, as well as mediating receptor endocytosis. In response to dietary fats, plays an important role in the regulation of adipocyte proliferation and differentiation. Acts as a receptor for omega-3 polyunsaturated fatty acids (PUFAs) at primary cilium of perivascular preadipocytes, initiating an adipogenic program via cAMP and CTCF-dependent chromatin remodeling that ultimately results in transcriptional activation of adipogenic genes and cell cycle entry. Induces differentiation of brown and beige adipocytes probably via autocrine and endocrine functions of FGF21 hormone. Contributes to the thermogenic activation of brown adipose tissue and the browning of white adipose tissue. Activates brown adipocytes by initiating intracellular calcium signaling leading to mitochondrial depolarization and fission, and overall increased mitochondrial respiration. Consequently stimulates fatty acid uptake and oxidation in mitochondria together with UCP1-mediated thermogenic respiration, eventually reducing fat mass. Regulates bi-potential differentiation of bone marrow mesenchymal stem cells toward osteoblasts or adipocytes likely by up-regulating distinct integrins. In response to dietary fats regulates hormone secretion and appetite. Stimulates GIP and GLP1 secretion from enteroendocrine cells as well as GCG secretion in pancreatic alpha cells, thereby playing a role in the regulation of blood glucose levels. Negatively regulates glucose-induced SST secretion in pancreatic delta cells. Mediates LCFAs inhibition of GHRL secretion, an appetite-controlling hormone. In taste buds, contributes to sensing of dietary fatty acids by the gustatory system. During the inflammatory response, promotes anti-inflammatory M2 macrophage differentiation in adipose tissue. Mediates the anti-inflammatory effects of omega-3 PUFAs via inhibition of NLRP3 inflammasome activation. In this pathway, interacts with adapter protein ARRB2 and inhibits the priming step triggered by Toll-like receptors (TLRs) at the level of TAK1 and TAB1. Further inhibits the activation step when ARRB2 directly associates with NLRP3, leading to inhibition of pro-inflammatory cytokine release. Mediates LCFAs anti-apoptotic effects. This Rattus norvegicus (Rat) protein is Free fatty acid receptor 4 (Ffar4).